A 219-amino-acid chain; its full sequence is Leukocyte surface antigen CD53 (219 aa).

Over Met-1–Tyr-11 the chain is Cytoplasmic. A helical transmembrane segment spans residues Val-12–Ile-32. At Tyr-33–Asn-54 the chain is on the extracellular side. A helical transmembrane segment spans residues Val-55–Leu-69. At Gly-70 to Cys-80 the chain is on the cytoplasmic side. Residues Leu-81–Tyr-106 form a helical membrane-spanning segment. The Extracellular portion of the chain corresponds to Glu-107 to Asn-181. N-linked (GlcNAc...) asparagine glycosylation is found at Asn-129 and Asn-148. Residues Phe-182 to Leu-206 form a helical membrane-spanning segment. At Asn-207–Leu-219 the chain is on the cytoplasmic side.

It belongs to the tetraspanin (TM4SF) family. Interacts with SCIMP. Interacts with CD45/PTPRC. Interacts with IL7R. Interacts with RBL2 and PPP2CA. In terms of tissue distribution, B-cells, monocytes, macrophages, neutrophils, single (CD4 or CD8) positive thymocytes and peripheral T-cells.

Its subcellular location is the cell membrane. It is found in the cell junction. The protein localises to the membrane. It localises to the synapse. Structural component of specialized membrane microdomains known as tetraspanin-enriched microdomains (TERMs), which act as platforms for receptor clustering and signaling. Participates thereby in diverse biological functions such as cell signal transduction, adhesion, migration and protein trafficking. Plays a role in the activation of monocytes and B-cells. Acts as an essential regulator of B-cell development by promoting interleukin-7 receptor/IL7R signaling. Also promotes, in B-cells, the BCR signaling by recruiting PKC to the plasma membrane in order to phosphorylate its substrates. Plays an essential role in B- and T-cells homing to lymph nodes by stabilizing L-selectin/SELL cell surface expression. Also mediates metabolic and inflammatory functions in hepatocytes and adipose tissue by promoting TNF-alpha and LPS signaling independent of the immune compartment. The chain is Leukocyte surface antigen CD53 (CD53) from Homo sapiens (Human).